The chain runs to 219 residues: MGKGNNMIPNGHFHKDWQRFVKTWFNQPARRHRRKQNRIKKAKAVAPRPAAGPLRPVVRCPTIRYHTKVRAGRGFTLREIRAAGLNPAFARTIGIAVDPRRRNKSVESLQVNVQRLKEYRARLILFPKGKKVLKGEANEEERKLATQLRGPLMPVQQPAPKSIARAITEEEKDFKAYQYLRGARSIAKLVGIRAKRLKDAAENPDDVTKAPTAVKRNKT.

A disordered region spans residues 198–219; sequence KDAAENPDDVTKAPTAVKRNKT.

The protein belongs to the eukaryotic ribosomal protein eL13 family. Component of the 60S large ribosomal subunit (LSU).

Its subcellular location is the cytoplasm. In terms of biological role, component of the ribosome, a large ribonucleoprotein complex responsible for the synthesis of proteins in the cell. The small ribosomal subunit (SSU) binds messenger RNAs (mRNAs) and translates the encoded message by selecting cognate aminoacyl-transfer RNA (tRNA) molecules. The large subunit (LSU) contains the ribosomal catalytic site termed the peptidyl transferase center (PTC), which catalyzes the formation of peptide bonds, thereby polymerizing the amino acids delivered by tRNAs into a polypeptide chain. The nascent polypeptides leave the ribosome through a tunnel in the LSU and interact with protein factors that function in enzymatic processing, targeting, and the membrane insertion of nascent chains at the exit of the ribosomal tunnel. As part of the LSU, it is probably required for its formation and the maturation of rRNAs. This chain is Large ribosomal subunit protein eL13 (RpL13), found in Spodoptera frugiperda (Fall armyworm).